Here is a 276-residue protein sequence, read N- to C-terminus: Protease HtpX homolog (276 aa).

A helical membrane pass occupies residues 14–34; it reads IVLFALIGQALGGTGGMLLAF. Zn(2+) is bound at residue His130. Glu131 is an active-site residue. A Zn(2+)-binding site is contributed by His134. The next 2 membrane-spanning stretches (helical) occupy residues 145–165 and 171–191; these read VAATLAGAITMLSRFALFFGG and LVSLLMMILAPMAAMLIQSAI. Glu196 is a Zn(2+) binding site.

The protein belongs to the peptidase M48B family. It depends on Zn(2+) as a cofactor.

Its subcellular location is the cell inner membrane. This Salinibacter ruber (strain DSM 13855 / M31) protein is Protease HtpX homolog.